A 419-amino-acid polypeptide reads, in one-letter code: Tyrosine--tRNA ligase 2 (419 aa).

Tyr-34 lines the L-tyrosine pocket. Residues 39–48 (PTGDSMHIGH) carry the 'HIGH' region motif. Tyr-168 and Gln-172 together coordinate L-tyrosine. A 'KMSKS' region motif is present at residues 230 to 234 (KFGKS). An ATP-binding site is contributed by Lys-233. One can recognise an S4 RNA-binding domain in the interval 352–418 (KNIVEWLVDL…GKKNYSLVKL (67 aa)).

This sequence belongs to the class-I aminoacyl-tRNA synthetase family. TyrS type 1 subfamily. Homodimer.

It is found in the cytoplasm. It carries out the reaction tRNA(Tyr) + L-tyrosine + ATP = L-tyrosyl-tRNA(Tyr) + AMP + diphosphate + H(+). Functionally, catalyzes the attachment of tyrosine to tRNA(Tyr) in a two-step reaction: tyrosine is first activated by ATP to form Tyr-AMP and then transferred to the acceptor end of tRNA(Tyr). The polypeptide is Tyrosine--tRNA ligase 2 (Bacillus anthracis).